The sequence spans 105 residues: Replication restart protein PriB (105 aa).

In terms of domain architecture, SSB spans Met1 to Asp102.

This sequence belongs to the PriB family. As to quaternary structure, homodimer. Interacts with PriA and DnaT. Component of the replication restart primosome. Primosome assembly occurs via a 'hand-off' mechanism. PriA binds to replication forks, subsequently PriB then DnaT bind; DnaT then displaces ssDNA to generate the helicase loading substrate.

Involved in the restart of stalled replication forks, which reloads the replicative helicase on sites other than the origin of replication; the PriA-PriB pathway is the major replication restart pathway. During primosome assembly it facilitates complex formation between PriA and DnaT on DNA; stabilizes PriA on DNA. Stimulates the DNA unwinding activity of PriA helicase. The chain is Replication restart protein PriB from Yersinia pseudotuberculosis serotype O:1b (strain IP 31758).